The primary structure comprises 162 residues: Ribonuclease H (162 aa).

In terms of domain architecture, RNase H type-1 spans 6–154; that stretch reads DMKRVEIFTD…ADRLANQGVE (149 aa). Mg(2+) contacts are provided by aspartate 15, glutamate 53, aspartate 82, and aspartate 146.

Belongs to the RNase H family. As to quaternary structure, monomer. Mg(2+) serves as cofactor.

It is found in the cytoplasm. It carries out the reaction Endonucleolytic cleavage to 5'-phosphomonoester.. Functionally, endonuclease that specifically degrades the RNA of RNA-DNA hybrids. The chain is Ribonuclease H from Nitrosomonas eutropha (strain DSM 101675 / C91 / Nm57).